We begin with the raw amino-acid sequence, 195 residues long: 3-isopropylmalate dehydratase small subunit (195 aa).

The protein belongs to the LeuD family. LeuD type 1 subfamily. In terms of assembly, heterodimer of LeuC and LeuD.

The enzyme catalyses (2R,3S)-3-isopropylmalate = (2S)-2-isopropylmalate. It functions in the pathway amino-acid biosynthesis; L-leucine biosynthesis; L-leucine from 3-methyl-2-oxobutanoate: step 2/4. Functionally, catalyzes the isomerization between 2-isopropylmalate and 3-isopropylmalate, via the formation of 2-isopropylmaleate. This is 3-isopropylmalate dehydratase small subunit from Thermobifida fusca (strain YX).